The chain runs to 1400 residues: DNA-directed RNA polymerase subunit beta' (1400 aa).

4 residues coordinate Zn(2+): Cys-71, Cys-73, Cys-86, and Cys-89. Residues Asp-462, Asp-464, and Asp-466 each contribute to the Mg(2+) site. The Zn(2+) site is built by Cys-811, Cys-885, Cys-892, and Cys-895.

The protein belongs to the RNA polymerase beta' chain family. The RNAP catalytic core consists of 2 alpha, 1 beta, 1 beta' and 1 omega subunit. When a sigma factor is associated with the core the holoenzyme is formed, which can initiate transcription. Mg(2+) is required as a cofactor. Zn(2+) serves as cofactor.

The catalysed reaction is RNA(n) + a ribonucleoside 5'-triphosphate = RNA(n+1) + diphosphate. DNA-dependent RNA polymerase catalyzes the transcription of DNA into RNA using the four ribonucleoside triphosphates as substrates. This Brucella canis (strain ATCC 23365 / NCTC 10854 / RM-666) protein is DNA-directed RNA polymerase subunit beta'.